Consider the following 292-residue polypeptide: MAAEAHAPTASEYIVHHLQHLQNIKQKSIVDFSVVNIDSVVVGLVLGAIALFAFWLCARKATSGVPGRFQAAVEILVEMVDNQAKANIHNAESRKFIAPLALTVFVWIFLMNAMDMLPVDLLPAIWAQIYGAAGHDPHHAYLRVVPTADLSTTLGLSTAVLVLCLYYSVKIKGLGGWAHELVTAPFGTSKNPVFALILGVVNLLMQIIEYVAKTVSHGMRLFGNMYAGELVFMLIALMGGAAAMSLSGVLLPVGHIIAGSIWAIFHILVITLQAFIFMMLALIYLGQAHEAH.

Helical transmembrane passes span 37–57 (IDSV…FWLC), 96–116 (FIAP…AMDM), 144–164 (VVPT…LVLC), 192–212 (PVFA…EYVA), 230–250 (LVFM…SGVL), and 263–283 (AIFH…LALI).

It belongs to the ATPase A chain family. As to quaternary structure, F-type ATPases have 2 components, CF(1) - the catalytic core - and CF(0) - the membrane proton channel. CF(1) has five subunits: alpha(3), beta(3), gamma(1), delta(1), epsilon(1). CF(0) has three main subunits: a(1), b(2) and c(9-12). The alpha and beta chains form an alternating ring which encloses part of the gamma chain. CF(1) is attached to CF(0) by a central stalk formed by the gamma and epsilon chains, while a peripheral stalk is formed by the delta and b chains.

The protein resides in the cell inner membrane. In terms of biological role, key component of the proton channel; it plays a direct role in the translocation of protons across the membrane. This is ATP synthase subunit a from Paracidovorax citrulli (strain AAC00-1) (Acidovorax citrulli).